The sequence spans 428 residues: Dihydroorotase (428 aa).

Positions 60 and 62 each coordinate Zn(2+). Substrate-binding positions include 62-64 and Asn-94; that span reads HLR. Asp-152, His-179, and His-232 together coordinate Zn(2+). Asn-278 is a substrate binding site. Asp-305 provides a ligand contact to Zn(2+). Asp-305 is a catalytic residue. Residues His-309 and 323 to 324 contribute to the substrate site; that span reads FG.

It belongs to the metallo-dependent hydrolases superfamily. DHOase family. Class I DHOase subfamily. Requires Zn(2+) as cofactor.

The enzyme catalyses (S)-dihydroorotate + H2O = N-carbamoyl-L-aspartate + H(+). It participates in pyrimidine metabolism; UMP biosynthesis via de novo pathway; (S)-dihydroorotate from bicarbonate: step 3/3. Catalyzes the reversible cyclization of carbamoyl aspartate to dihydroorotate. This chain is Dihydroorotase, found in Anoxybacillus flavithermus (strain DSM 21510 / WK1).